A 137-amino-acid polypeptide reads, in one-letter code: Large ribosomal subunit protein uL16 (137 aa).

The protein belongs to the universal ribosomal protein uL16 family. As to quaternary structure, part of the 50S ribosomal subunit.

In terms of biological role, binds 23S rRNA and is also seen to make contacts with the A and possibly P site tRNAs. The chain is Large ribosomal subunit protein uL16 from Sinorhizobium medicae (strain WSM419) (Ensifer medicae).